A 117-amino-acid polypeptide reads, in one-letter code: Large ribosomal subunit protein uL18 (117 aa).

Belongs to the universal ribosomal protein uL18 family. Part of the 50S ribosomal subunit; part of the 5S rRNA/L5/L18/L25 subcomplex. Contacts the 5S and 23S rRNAs.

This is one of the proteins that bind and probably mediate the attachment of the 5S RNA into the large ribosomal subunit, where it forms part of the central protuberance. The protein is Large ribosomal subunit protein uL18 of Proteus mirabilis (strain HI4320).